A 227-amino-acid polypeptide reads, in one-letter code: ATP-dependent Clp protease proteolytic subunit 1 (227 aa).

Serine 124 acts as the Nucleophile in catalysis. Histidine 149 is an active-site residue.

The protein belongs to the peptidase S14 family. Fourteen ClpP subunits assemble into 2 heptameric rings which stack back to back to give a disk-like structure with a central cavity, resembling the structure of eukaryotic proteasomes.

It localises to the cytoplasm. The catalysed reaction is Hydrolysis of proteins to small peptides in the presence of ATP and magnesium. alpha-casein is the usual test substrate. In the absence of ATP, only oligopeptides shorter than five residues are hydrolyzed (such as succinyl-Leu-Tyr-|-NHMec, and Leu-Tyr-Leu-|-Tyr-Trp, in which cleavage of the -Tyr-|-Leu- and -Tyr-|-Trp bonds also occurs).. Functionally, cleaves peptides in various proteins in a process that requires ATP hydrolysis. Has a chymotrypsin-like activity. Plays a major role in the degradation of misfolded proteins. The protein is ATP-dependent Clp protease proteolytic subunit 1 of Rhodopirellula baltica (strain DSM 10527 / NCIMB 13988 / SH1).